Here is a 399-residue protein sequence, read N- to C-terminus: Zinc metalloproteinase nas-25 (399 aa).

Residues 1–20 (MQIYLGITICLVAFLTVIDC) form the signal peptide. Residues 41–237 (QVQRDLTYRW…DQINQYYQCY (197 aa)) enclose the Peptidase M12A domain. 2 N-linked (GlcNAc...) asparagine glycosylation sites follow: Asn-52 and Asn-61. 4 cysteine pairs are disulfide-bonded: Cys-82–Cys-236, Cys-106–Cys-126, Cys-240–Cys-260, and Cys-265–Cys-274. His-134 is a binding site for Zn(2+). Residue Glu-135 is part of the active site. The Zn(2+) site is built by His-138 and His-144. In terms of domain architecture, EGF-like spans 232–275 (QYYQCYDSCRNAGQLANCANGGIPNPNNCQVCNCPMGYGGDLCD). Asn-371 carries an N-linked (GlcNAc...) asparagine glycan.

The cofactor is Zn(2+). Expressed in pharyngeal muscles, pharyngeal-intestinal valve, rectal gland cells and arcade cells.

It localises to the secreted. In terms of biological role, metalloprotease. This chain is Zinc metalloproteinase nas-25 (nas-25), found in Caenorhabditis elegans.